The chain runs to 484 residues: Aldehyde dehydrogenase family 3 member A2 (484 aa).

The Cytoplasmic portion of the chain corresponds to 1–463 (MERQVQRLRQ…FLLKQFNKGR (463 aa)). 185–190 (GNTAVG) is a binding site for NAD(+). Active-site residues include glutamate 207 and cysteine 241. The residue at position 293 (serine 293) is a Phosphoserine. A helical transmembrane segment spans residues 464–484 (LQLLLLVCLVAVAAVIVKDQL). Positions 481–484 (KDQL) match the Prevents secretion from ER motif.

The protein belongs to the aldehyde dehydrogenase family. Homodimer. The N-terminus is blocked.

It localises to the microsome membrane. It is found in the endoplasmic reticulum membrane. The enzyme catalyses an aldehyde + NAD(+) + H2O = a carboxylate + NADH + 2 H(+). It carries out the reaction a fatty aldehyde + NAD(+) + H2O = a fatty acid + NADH + 2 H(+). It catalyses the reaction (2E)-hexadecenal + NAD(+) + H2O = (E)-hexadec-2-enoate + NADH + 2 H(+). The catalysed reaction is hexadecanoate + NADH + 2 H(+) = hexadecanal + NAD(+) + H2O. The enzyme catalyses 22-oxodocosanoate + NAD(+) + H2O = docosanedioate + NADH + 2 H(+). It carries out the reaction 2,6,10,14-tetramethylpentadecanal + NAD(+) + H2O = 2,6,10,14-tetramethylpentadecanoate + NADH + 2 H(+). It catalyses the reaction octadecanal + NAD(+) + H2O = octadecanoate + NADH + 2 H(+). The catalysed reaction is dodecanoate + NADH + 2 H(+) = dodecanal + NAD(+) + H2O. The enzyme catalyses decanal + NAD(+) + H2O = decanoate + NADH + 2 H(+). It carries out the reaction tetradecanal + NAD(+) + H2O = tetradecanoate + NADH + 2 H(+). It catalyses the reaction octanal + NAD(+) + H2O = octanoate + NADH + 2 H(+). The catalysed reaction is heptanal + NAD(+) + H2O = heptanoate + NADH + 2 H(+). The enzyme catalyses (2E,6E)-farnesal + NAD(+) + H2O = (2E,6E)-farnesoate + NADH + 2 H(+). In terms of biological role, catalyzes the oxidation of medium and long-chain aliphatic aldehydes to fatty acids. Active on a variety of saturated and unsaturated aliphatic aldehydes between 6 and 24 carbons in length. Responsible for conversion of the sphingosine 1-phosphate (S1P) degradation product hexadecenal to hexadecenoic acid. The polypeptide is Aldehyde dehydrogenase family 3 member A2 (Aldh3a2) (Rattus norvegicus (Rat)).